A 224-amino-acid chain; its full sequence is ATP phosphoribosyltransferase (224 aa).

Belongs to the ATP phosphoribosyltransferase family. Short subfamily. As to quaternary structure, heteromultimer composed of HisG and HisZ subunits.

It localises to the cytoplasm. The catalysed reaction is 1-(5-phospho-beta-D-ribosyl)-ATP + diphosphate = 5-phospho-alpha-D-ribose 1-diphosphate + ATP. Its pathway is amino-acid biosynthesis; L-histidine biosynthesis; L-histidine from 5-phospho-alpha-D-ribose 1-diphosphate: step 1/9. Catalyzes the condensation of ATP and 5-phosphoribose 1-diphosphate to form N'-(5'-phosphoribosyl)-ATP (PR-ATP). Has a crucial role in the pathway because the rate of histidine biosynthesis seems to be controlled primarily by regulation of HisG enzymatic activity. This chain is ATP phosphoribosyltransferase, found in Cupriavidus pinatubonensis (strain JMP 134 / LMG 1197) (Cupriavidus necator (strain JMP 134)).